Reading from the N-terminus, the 1642-residue chain is Cholesterol transporter ABCA5 (1642 aa).

Residues 32 to 52 traverse the membrane as a helical segment; that stretch reads SVQEILFPLFFLFWLILISMM. N86 and N190 each carry an N-linked (GlcNAc...) asparagine glycan. The next 6 helical transmembrane spans lie at 220-240, 264-284, 297-317, 327-347, 355-375, and 396-416; these read VILI…AIHI, LSWV…MAVI, IVIF…ALML, VGVV…LIVL, LVWL…AQVM, and LIIT…LAVY. N458 carries an N-linked (GlcNAc...) asparagine glycan. An ABC transporter 1 domain is found at 478 to 713; sequence IRISGIQKAY…WGIGYRLSMY (236 aa). An ATP-binding site is contributed by 514 to 521; sequence GHSGTGKS. Residues 866 to 886 form a helical membrane-spanning segment; the sequence is LLLLLIFFAVQIFMFLVHHSF. N-linked (GlcNAc...) asparagine glycosylation occurs at N919. The chain crosses the membrane as a helical span at residues 967 to 987; that stretch reads VFTAVFNSTMVYSLPVMMNII. Residue N996 is glycosylated (N-linked (GlcNAc...) asparagine). 6 helical membrane passes run 1021–1041, 1071–1091, 1102–1122, 1139–1159, 1164–1184, and 1207–1227; these read LYFQ…YFAM, VVDI…LFAF, FLAV…FTYI, FIYS…FFLG, AVFH…GCLI, and LLVA…LLQH. Residues 1290 to 1533 enclose the ABC transporter 2 domain; it reads IMVYNLHKEY…FGKGYFLEIK (244 aa). Residue 1333–1340 coordinates ATP; sequence GPNGAGKS.

It belongs to the ABC transporter superfamily. ABCA family. Post-translationally, N-glycosylated. As to expression, expressed in testis, epididymis, lung and brain.

The protein resides in the lysosome membrane. It localises to the late endosome membrane. Its subcellular location is the golgi apparatus membrane. It is found in the cell membrane. The enzyme catalyses cholesterol(in) + ATP + H2O = cholesterol(out) + ADP + phosphate + H(+). Its function is as follows. Cholesterol efflux transporter in macrophages that is responsible for APOAI/high-density lipoproteins (HDL) formation at the plasma membrane under high cholesterol levels and participates in reverse cholesterol transport. May play a role in the processing of autolysosomes. The polypeptide is Cholesterol transporter ABCA5 (Rattus norvegicus (Rat)).